The sequence spans 190 residues: dTTP/UTP pyrophosphatase (190 aa).

Catalysis depends on Asp-69, which acts as the Proton acceptor.

This sequence belongs to the Maf family. YhdE subfamily. It depends on a divalent metal cation as a cofactor.

Its subcellular location is the cytoplasm. It catalyses the reaction dTTP + H2O = dTMP + diphosphate + H(+). It carries out the reaction UTP + H2O = UMP + diphosphate + H(+). Its function is as follows. Nucleoside triphosphate pyrophosphatase that hydrolyzes dTTP and UTP. May have a dual role in cell division arrest and in preventing the incorporation of modified nucleotides into cellular nucleic acids. The chain is dTTP/UTP pyrophosphatase from Sphingopyxis alaskensis (strain DSM 13593 / LMG 18877 / RB2256) (Sphingomonas alaskensis).